Consider the following 363-residue polypeptide: Protein CPn_1058/CP_0792/CPj1058/CpB1100 (363 aa).

The N-terminal stretch at 1–27 (MKLYQTLRGIVLVSTGCIFLGMHGGYA) is a signal peptide.

Belongs to the chlamydial CPn_1058/CT_355/TC_0634 family.

The polypeptide is Protein CPn_1058/CP_0792/CPj1058/CpB1100 (Chlamydia pneumoniae (Chlamydophila pneumoniae)).